Here is a 482-residue protein sequence, read N- to C-terminus: Glutamate--tRNA ligase (482 aa).

Residues 9 to 19 carry the 'HIGH' region motif; the sequence is PSPTGPLHIGG. The 'KMSKS' region signature appears at 250-254; sequence KMSKR. Position 253 (Lys253) interacts with ATP.

Belongs to the class-I aminoacyl-tRNA synthetase family. Glutamate--tRNA ligase type 1 subfamily. Monomer.

Its subcellular location is the cytoplasm. The catalysed reaction is tRNA(Glu) + L-glutamate + ATP = L-glutamyl-tRNA(Glu) + AMP + diphosphate. Its function is as follows. Catalyzes the attachment of glutamate to tRNA(Glu) in a two-step reaction: glutamate is first activated by ATP to form Glu-AMP and then transferred to the acceptor end of tRNA(Glu). In Desulforamulus reducens (strain ATCC BAA-1160 / DSM 100696 / MI-1) (Desulfotomaculum reducens), this protein is Glutamate--tRNA ligase.